A 355-amino-acid chain; its full sequence is Protein RecA (355 aa).

72–79 serves as a coordination point for ATP; that stretch reads GPESSGKT.

The protein belongs to the RecA family.

The protein resides in the cytoplasm. Its function is as follows. Can catalyze the hydrolysis of ATP in the presence of single-stranded DNA, the ATP-dependent uptake of single-stranded DNA by duplex DNA, and the ATP-dependent hybridization of homologous single-stranded DNAs. It interacts with LexA causing its activation and leading to its autocatalytic cleavage. This Wolbachia pipientis subsp. Culex pipiens (strain wPip) protein is Protein RecA.